The following is a 153-amino-acid chain: Salivary C-type lectin 1 (153 aa).

A signal peptide spans 1-19; the sequence is MIFSLYLIVAISLADLTAA. In terms of domain architecture, C-type lectin spans 26–151; sequence KNRFCFPNVV…CSSTRRFVCE (126 aa). Disulfide bonds link Cys45-Cys150 and Cys122-Cys142.

Ca(2+) serves as cofactor. Expressed in female salivary gland. Not detected or low-level expression in female midgut and fat body.

The protein resides in the secreted. Functionally, salivary protein with carbohydrate-binding activity; exibits high affinity for D-mannose. Agglutinates host erythrocytes. Probably participates in mosquito innate immune responses to prevent microorganism multiplication in sugar and blood meals. In terms of biological role, (Microbial infection) Agglutinates Staphylococcus aureus in vitro. Its function is as follows. (Microbial infection) Agglutinates Candida albicans in vitro. (Microbial infection) Does not agglutinate Escherichia coli in vitro. This Aedes albopictus (Asian tiger mosquito) protein is Salivary C-type lectin 1.